A 488-amino-acid chain; its full sequence is Probable malate:quinone oxidoreductase (488 aa).

It belongs to the MQO family. Requires FAD as cofactor.

The enzyme catalyses (S)-malate + a quinone = a quinol + oxaloacetate. It functions in the pathway carbohydrate metabolism; tricarboxylic acid cycle; oxaloacetate from (S)-malate (quinone route): step 1/1. The sequence is that of Probable malate:quinone oxidoreductase from Neisseria gonorrhoeae (strain ATCC 700825 / FA 1090).